Here is a 333-residue protein sequence, read N- to C-terminus: MTIAVLGAGSWGTTLAVLLARKEYEVRLWAHRSEFATALEQERENRRYLNGVHFPDSLHIVATLPELIAWAEVIVTAVPAQALRETVRAFRDIPLEGKIVVNVAKGIELGTGMRMSEVLLDELPQLQLSQVVALYGPSHAEEVSKEQPTTVVASSPSRNAAETVQELFHTNRFRVYINTDIIGVEVAGSVKNIIAIAAGISDGLGFGDNAKAAIITRGLAEISRLCTKLGGDAMTLSGLSGIGDLVVTCLSHHSRNRHVGEEIGKGRTLEEIIHSMSMIAEGVHSSKAVYELSRKVGVDMPITRAVYEMLFEAKPAAQAILDLMNRDPRSERD.

NADPH contacts are provided by serine 10, tryptophan 11, histidine 31, arginine 32, and lysine 105. Lysine 105, glycine 136, and serine 138 together coordinate sn-glycerol 3-phosphate. Alanine 140 is a binding site for NADPH. Positions 191, 244, 254, 255, and 256 each coordinate sn-glycerol 3-phosphate. The Proton acceptor role is filled by lysine 191. Arginine 255 lines the NADPH pocket. NADPH contacts are provided by isoleucine 279 and glutamate 281.

This sequence belongs to the NAD-dependent glycerol-3-phosphate dehydrogenase family.

The protein resides in the cytoplasm. It carries out the reaction sn-glycerol 3-phosphate + NAD(+) = dihydroxyacetone phosphate + NADH + H(+). The catalysed reaction is sn-glycerol 3-phosphate + NADP(+) = dihydroxyacetone phosphate + NADPH + H(+). It participates in membrane lipid metabolism; glycerophospholipid metabolism. In terms of biological role, catalyzes the reduction of the glycolytic intermediate dihydroxyacetone phosphate (DHAP) to sn-glycerol 3-phosphate (G3P), the key precursor for phospholipid synthesis. The chain is Glycerol-3-phosphate dehydrogenase [NAD(P)+] from Chlorobium chlorochromatii (strain CaD3).